Reading from the N-terminus, the 257-residue chain is Thiazole synthase (257 aa).

Residue K99 is the Schiff-base intermediate with DXP of the active site. 1-deoxy-D-xylulose 5-phosphate is bound by residues G160, 186 to 187 (AG), and 208 to 209 (NT).

It belongs to the ThiG family. Homotetramer. Forms heterodimers with either ThiH or ThiS.

Its subcellular location is the cytoplasm. The enzyme catalyses [ThiS sulfur-carrier protein]-C-terminal-Gly-aminoethanethioate + 2-iminoacetate + 1-deoxy-D-xylulose 5-phosphate = [ThiS sulfur-carrier protein]-C-terminal Gly-Gly + 2-[(2R,5Z)-2-carboxy-4-methylthiazol-5(2H)-ylidene]ethyl phosphate + 2 H2O + H(+). It functions in the pathway cofactor biosynthesis; thiamine diphosphate biosynthesis. Its function is as follows. Catalyzes the rearrangement of 1-deoxy-D-xylulose 5-phosphate (DXP) to produce the thiazole phosphate moiety of thiamine. Sulfur is provided by the thiocarboxylate moiety of the carrier protein ThiS. In vitro, sulfur can be provided by H(2)S. This Thermodesulfovibrio yellowstonii (strain ATCC 51303 / DSM 11347 / YP87) protein is Thiazole synthase.